Reading from the N-terminus, the 207-residue chain is SPRY domain-containing protein 4 (207 aa).

One can recognise a B30.2/SPRY domain in the interval 12–207; sequence YRWGTKRWGV…HSGLEVPKGL (196 aa). Residues Lys-53 and Lys-130 each carry the N6-acetyllysine modification. At Lys-139 the chain carries N6-succinyllysine.

The chain is SPRY domain-containing protein 4 (Spryd4) from Mus musculus (Mouse).